The following is a 311-amino-acid chain: CD-NTase-associated protein 6 (311 aa).

ATP contacts are provided by residues 84–89 (GSGKTE) and 215–216 (RR).

It belongs to the AAA ATPase family. Homohexamer. Forms a 1:1:6 CdnC:Cap7:Cap6 complex.

Functionally, regulates complex assembly in a CBASS antivirus system. CBASS (cyclic oligonucleotide-based antiphage signaling system) provides immunity against bacteriophage. The CD-NTase protein synthesizes cyclic nucleotides in response to infection; these serve as specific second messenger signals. The signals activate a diverse range of effectors, leading to bacterial cell death and thus abortive phage infection. A type III-C(AAA) CBASS system. In terms of biological role, binds and disassembles an active CdnC:Cap7 (Cap7 is also called HORMA) complex, inhibiting the complex's ability to synthesize cyclic nucleotide second messengers. An AAA+-ATPase remodeler, in the absence of foreign threat Cap6 (also called Trip13) probably maintains the Cap7 protein in its open, inactive state. Once activated (presumably by a bacteriophage protein) Cap7 binds to and activates its cognate CD-NTase (CdnC in this bacteria) to synthesize cAAA, a cyclic nucleotide second messenger. cAAA activates the NucC endonuclease which degrades all DNA in the infected cell, causing cell death and abortive phage infection. Protects E.coli strain JP313 against bacteriophage lambda cI- infection. When the cdnC-cap7-cap6-nucC operon is transformed into a susceptible E.coli strain it confers bacteriophage lambda cI- immunity. Mutations in the sensor (Cap7 also called HORMA) or effector proteins (CdnC, NucC) but not the disassembly protein (Cap6 also called Trip13) no longer confer immunity. The presence of the intact operon leads to culture collapse and cell death, which occurs before the phage has finished its replication cycle, thus protecting non-infected bacteria by aborting the phage infection and preventing its propagation. The polypeptide is CD-NTase-associated protein 6 (Escherichia coli (strain MS 115-1)).